We begin with the raw amino-acid sequence, 257 residues long: Protein-tyrosine-phosphatase IBR5 (257 aa).

The Tyrosine-protein phosphatase domain occupies Phe49 to Gly185. Cys129 (phosphocysteine intermediate) is an active-site residue. A disordered region spans residues Gln235 to Ser257.

Belongs to the protein-tyrosine phosphatase family. In terms of assembly, interacts with SKP1A/ASK1 and with MPK12. Expressed in root tips and vasculature, cotyledons, stems, leaves vasculature and hydathodes, flowers, siliques, and seeds.

It localises to the nucleus. It carries out the reaction O-phospho-L-tyrosyl-[protein] + H2O = L-tyrosyl-[protein] + phosphate. Required for the transduction of auxin and abscisic acid (ABA) signaling pathways. Dephosphorylates and inactivates the MAP kinase MPK12. In Arabidopsis thaliana (Mouse-ear cress), this protein is Protein-tyrosine-phosphatase IBR5 (IBR5).